A 428-amino-acid polypeptide reads, in one-letter code: Cysteine synthase 2 (428 aa).

The helical transmembrane segment at 7-27 threads the bilayer; it reads IYIGSAFVAGVVLTIAFKDLF. Lys-106 is subject to N6-(pyridoxal phosphate)lysine. Pyridoxal 5'-phosphate-binding positions include 260-264 and Ser-367; that span reads GTGGT.

It belongs to the cysteine synthase/cystathionine beta-synthase family. Pyridoxal 5'-phosphate is required as a cofactor.

Its subcellular location is the mitochondrion outer membrane. It carries out the reaction O-acetyl-L-serine + hydrogen sulfide = L-cysteine + acetate. In terms of biological role, putative cysteine synthase that catalyzes the conversion of O-acetyl-L-serine (OAS) into cysteine, the last step in the cysteine biosynthesis pathway. However, in contrast to cysteine synthase cysB, this CS-like protein seems not to function in cysteine biosynthesis. The chain is Cysteine synthase 2 from Emericella nidulans (strain FGSC A4 / ATCC 38163 / CBS 112.46 / NRRL 194 / M139) (Aspergillus nidulans).